The chain runs to 718 residues: Origin of replication complex subunit 3 (718 aa).

Over residues 26-43 (GAAASSSSSSAPSLPSSG) the composition is skewed to low complexity. The tract at residues 26-75 (GAAASSSSSSAPSLPSSGRARRRIDVSGLASPNPKPGKRSRDDDAAEDDD) is disordered. Residues 659-666 (IKRKPHTS) carry the Nuclear localization signal motif.

This sequence belongs to the ORC3 family. In terms of assembly, component of the origin recognition complex (ORC) composed of at least ORC1, ORC2, ORC3, ORC4, ORC5 and ORC6. ORC is regulated in a cell-cycle and development dependent manner. It is sequentially assembled at the exit from anaphase of mitosis and disassembled as cells enter S phase. As to expression, expressed at low levels in the shoot apical meristem (SAM), leaves, ears and roots (including root tips).

The protein resides in the nucleus. In terms of biological role, component of the origin recognition complex (ORC) that binds origins of replication. DNA-binding is ATP-dependent. The specific DNA sequences that define origins of replication have not been identified yet. This chain is Origin of replication complex subunit 3, found in Oryza sativa subsp. japonica (Rice).